Here is an 846-residue protein sequence, read N- to C-terminus: Translation initiation factor IF-2 (846 aa).

The segment at 199 to 219 (KREEEEKKSKAKKAGGKGFKK) is disordered. The segment covering 207 to 219 (SKAKKAGGKGFKK) has biased composition (basic residues). Positions 345–512 (SRAPVVTIMG…AVLLQSEVLE (168 aa)) constitute a tr-type G domain. Residues 354 to 361 (GHVDHGKT) form a G1 region. 354–361 (GHVDHGKT) contributes to the GTP binding site. The G2 stretch occupies residues 379–383 (GITQH). Residues 400–403 (DTPG) are G3. GTP is bound by residues 400–404 (DTPGH) and 454–457 (NKID). The tract at residues 454-457 (NKID) is G4. Positions 490–492 (SAK) are G5.

This sequence belongs to the TRAFAC class translation factor GTPase superfamily. Classic translation factor GTPase family. IF-2 subfamily.

It localises to the cytoplasm. Functionally, one of the essential components for the initiation of protein synthesis. Protects formylmethionyl-tRNA from spontaneous hydrolysis and promotes its binding to the 30S ribosomal subunits. Also involved in the hydrolysis of GTP during the formation of the 70S ribosomal complex. The sequence is that of Translation initiation factor IF-2 from Francisella tularensis subsp. holarctica (strain LVS).